The following is a 287-amino-acid chain: UBX domain-containing protein 1 (287 aa).

One can recognise a UBA domain in the interval 1-42 (MAECSTLESLIEMGFSPSRAEKALAATGNQGIEPAMDWLVEH). Residues 44–207 (DDPDIDEPSV…VQEPPTKKEY (164 aa)) form a disordered region. Basic and acidic residues-rich tracts occupy residues 72-114 (CEER…EQEK) and 129-169 (KIQE…ERAR). Positions 72 to 164 (CEERLPLTEE…RVREKIARDK (93 aa)) form a coiled coil. Positions 176-197 (SEPISPPAEASIPATTPSPSSP) are enriched in low complexity. Residues 205-284 (KEYDQCRIQV…GLVPSAVLIV (80 aa)) form the UBX domain.

The protein resides in the cytoplasm. In terms of biological role, component of a complex required to couple deglycosylation and proteasome-mediated degradation of misfolded proteins in the endoplasmic reticulum that are retrotranslocated in the cytosol. Involved in ubiquitin-proteasome systems. The sequence is that of UBX domain-containing protein 1 (ubxn1) from Xenopus tropicalis (Western clawed frog).